The chain runs to 420 residues: Probable acetate kinase (420 aa).

Asn-10 is a binding site for Mg(2+). Lys-17 serves as a coordination point for ATP. Arg-97 is a binding site for substrate. Residue Asp-153 is the Proton donor/acceptor of the active site. Residue 213-217 (HIGSG) participates in ATP binding. A Mg(2+)-binding site is contributed by Glu-403.

Belongs to the acetokinase family. It depends on Mg(2+) as a cofactor.

It carries out the reaction acetate + ATP = acetyl phosphate + ADP. It participates in metabolic intermediate biosynthesis; acetyl-CoA biosynthesis; acetyl-CoA from acetate: step 1/2. This chain is Probable acetate kinase, found in Emericella nidulans (strain FGSC A4 / ATCC 38163 / CBS 112.46 / NRRL 194 / M139) (Aspergillus nidulans).